Reading from the N-terminus, the 297-residue chain is Protoheme IX farnesyltransferase 1 (297 aa).

The next 9 helical transmembrane spans lie at 23–43 (VVVL…RAGV), 45–65 (WSVL…AAVV), 93–113 (LPAL…LLAF), 117–137 (LTAW…TGFL), 145–165 (IVIG…AVSG), 171–191 (PLLL…ALAI), 216–236 (LHIL…YAIH), 241–261 (LYLA…WVLY), and 277–297 (IAYL…LLNL).

Belongs to the UbiA prenyltransferase family. Protoheme IX farnesyltransferase subfamily.

Its subcellular location is the cell inner membrane. The enzyme catalyses heme b + (2E,6E)-farnesyl diphosphate + H2O = Fe(II)-heme o + diphosphate. It functions in the pathway porphyrin-containing compound metabolism; heme O biosynthesis; heme O from protoheme: step 1/1. Converts heme B (protoheme IX) to heme O by substitution of the vinyl group on carbon 2 of heme B porphyrin ring with a hydroxyethyl farnesyl side group. The sequence is that of Protoheme IX farnesyltransferase 1 from Pseudomonas putida (strain GB-1).